The following is a 90-amino-acid chain: Photosystem I reaction center subunit PsaK 2 (90 aa).

Transmembrane regions (helical) follow at residues 20–42 (LSVG…FAIQ) and 67–89 (LATM…SSGI).

The protein belongs to the PsaG/PsaK family.

It localises to the cellular thylakoid membrane. The sequence is that of Photosystem I reaction center subunit PsaK 2 (psaK2) from Synechocystis sp. (strain ATCC 27184 / PCC 6803 / Kazusa).